The sequence spans 252 residues: Imidazole glycerol phosphate synthase subunit HisF (252 aa).

Active-site residues include Asp-11 and Asp-130.

It belongs to the HisA/HisF family. As to quaternary structure, heterodimer of HisH and HisF.

It is found in the cytoplasm. The enzyme catalyses 5-[(5-phospho-1-deoxy-D-ribulos-1-ylimino)methylamino]-1-(5-phospho-beta-D-ribosyl)imidazole-4-carboxamide + L-glutamine = D-erythro-1-(imidazol-4-yl)glycerol 3-phosphate + 5-amino-1-(5-phospho-beta-D-ribosyl)imidazole-4-carboxamide + L-glutamate + H(+). It functions in the pathway amino-acid biosynthesis; L-histidine biosynthesis; L-histidine from 5-phospho-alpha-D-ribose 1-diphosphate: step 5/9. IGPS catalyzes the conversion of PRFAR and glutamine to IGP, AICAR and glutamate. The HisF subunit catalyzes the cyclization activity that produces IGP and AICAR from PRFAR using the ammonia provided by the HisH subunit. The chain is Imidazole glycerol phosphate synthase subunit HisF from Bacillus cereus (strain Q1).